A 411-amino-acid chain; its full sequence is Tyrosine--tRNA ligase (411 aa).

Position 34 (Tyr34) interacts with L-tyrosine. The 'HIGH' region signature appears at 39 to 48 (CTATSLHIGS). L-tyrosine-binding residues include Tyr171 and Gln175. The 'KMSKS' region signature appears at 231–235 (KMGKT). Residue Lys234 participates in ATP binding. An S4 RNA-binding domain is found at 345–411 (ISAYELFHEA…GKKRHILVRV (67 aa)).

Belongs to the class-I aminoacyl-tRNA synthetase family. TyrS type 1 subfamily. In terms of assembly, homodimer.

Its subcellular location is the cytoplasm. It carries out the reaction tRNA(Tyr) + L-tyrosine + ATP = L-tyrosyl-tRNA(Tyr) + AMP + diphosphate + H(+). In terms of biological role, catalyzes the attachment of tyrosine to tRNA(Tyr) in a two-step reaction: tyrosine is first activated by ATP to form Tyr-AMP and then transferred to the acceptor end of tRNA(Tyr). The polypeptide is Tyrosine--tRNA ligase (Rickettsia massiliae (strain Mtu5)).